Consider the following 596-residue polypeptide: MATENGAVELGIQNPSTDKAPKGPTGERPLAAGKDPGPPDPKKAPDPPTLKKDAKAPASEKGDGTLAQPSTSSQGPKGEGDRGGGPAEGSAGPPAALPQQTATPETSVKKPKAEQGASGSQDPGKPRVGKKAAEGQAAARRGSPAFLHSPSCPAIISSSEKLLAKKPPSEASELTFEGVPMTHSPTDPRPAKAEEGKNILAESQKEVGEKTPGQAGQAKMQGDTSRGIEFQAVPSEKSEVGQALCLTAREEDCFQILDDCPPPPAPFPHRMVELRTGNVSSEFSMNSKEALGGGKFGAVCTCMEKATGLKLAAKVIKKQTPKDKEMVLLEIEVMNQLNHRNLIQLYAAIETPHEIVLFMEYIEGGELFERIVDEDYHLTEVDTMVFVRQICDGILFMHKMRVLHLDLKPENILCVNTTGHLVKIIDFGLARRYNPNEKLKVNFGTPEFLSPEVVNYDQISDKTDMWSMGVITYMLLSGLSPFLGDDDTETLNNVLSGNWYFDEETFEAVSDEAKDFVSNLIVKDQRARMNAAQCLAHPWLNNLAEKAKRCNRRLKSQILLKKYLMKRRWKKNFIAVSAANRFKKISSSGALMALGV.

Positions 1 to 224 are disordered; sequence MATENGAVEL…AGQAKMQGDT (224 aa). The residue at position 2 (A2) is an N-acetylalanine. Positions 40 to 63 are enriched in basic and acidic residues; the sequence is DPKKAPDPPTLKKDAKAPASEKGD. Over residues 88 to 104 the composition is skewed to low complexity; it reads EGSAGPPAALPQQTATP. 3 positions are modified to phosphoserine: S143, S149, and S151. Over residues 189–209 the composition is skewed to basic and acidic residues; that stretch reads RPAKAEEGKNILAESQKEVGE. The region spanning 285-540 is the Protein kinase domain; it reads MNSKEALGGG…AAQCLAHPWL (256 aa). Residues 291–299 and K314 each bind ATP; that span reads LGGGKFGAV. Residue D406 is the Proton acceptor of the active site. Residue T445 is modified to Phosphothreonine. A calmodulin-binding region spans residues 574–586; it reads IAVSAANRFKKIS.

Belongs to the protein kinase superfamily. CAMK Ser/Thr protein kinase family. As to quaternary structure, may interact with centrin. Heart and skeletal muscles. Increased expression in the apical tissue compared to the interventricular septal tissue.

The protein localises to the cytoplasm. It carries out the reaction L-seryl-[myosin light chain] + ATP = O-phospho-L-seryl-[myosin light chain] + ADP + H(+). It catalyses the reaction L-threonyl-[myosin light chain] + ATP = O-phospho-L-threonyl-[myosin light chain] + ADP + H(+). Its function is as follows. Implicated in the level of global muscle contraction and cardiac function. Phosphorylates a specific serine in the N-terminus of a myosin light chain. The polypeptide is Myosin light chain kinase 2, skeletal/cardiac muscle (MYLK2) (Homo sapiens (Human)).